The following is a 435-amino-acid chain: Glutamyl-tRNA(Gln) amidotransferase subunit D (435 aa).

Residues 91-419 form the Asparaginase/glutaminase domain; it reads PDVSIISTGG…EMAREMMREN (329 aa). Catalysis depends on residues Thr-101, Thr-177, Asp-178, and Lys-254.

The protein belongs to the asparaginase 1 family. GatD subfamily. As to quaternary structure, heterodimer of GatD and GatE.

It catalyses the reaction L-glutamyl-tRNA(Gln) + L-glutamine + ATP + H2O = L-glutaminyl-tRNA(Gln) + L-glutamate + ADP + phosphate + H(+). Allows the formation of correctly charged Gln-tRNA(Gln) through the transamidation of misacylated Glu-tRNA(Gln) in organisms which lack glutaminyl-tRNA synthetase. The reaction takes place in the presence of glutamine and ATP through an activated gamma-phospho-Glu-tRNA(Gln). The GatDE system is specific for glutamate and does not act on aspartate. The chain is Glutamyl-tRNA(Gln) amidotransferase subunit D (gatD) from Methanothermobacter thermautotrophicus (strain ATCC 29096 / DSM 1053 / JCM 10044 / NBRC 100330 / Delta H) (Methanobacterium thermoautotrophicum).